A 509-amino-acid chain; its full sequence is Probable Xaa-Pro aminopeptidase MAC_04092 (509 aa).

Mn(2+)-binding residues include Asp-273, Asp-284, Glu-437, and Glu-478.

It belongs to the peptidase M24B family. Mn(2+) is required as a cofactor.

The catalysed reaction is Release of any N-terminal amino acid, including proline, that is linked to proline, even from a dipeptide or tripeptide.. Catalyzes the removal of a penultimate prolyl residue from the N-termini of peptides. The chain is Probable Xaa-Pro aminopeptidase MAC_04092 from Metarhizium acridum (strain CQMa 102).